Reading from the N-terminus, the 448-residue chain is Probable glycine dehydrogenase (decarboxylating) subunit 1 (448 aa).

This sequence belongs to the GcvP family. N-terminal subunit subfamily. As to quaternary structure, the glycine cleavage system is composed of four proteins: P, T, L and H. In this organism, the P 'protein' is a heterodimer of two subunits.

The catalysed reaction is N(6)-[(R)-lipoyl]-L-lysyl-[glycine-cleavage complex H protein] + glycine + H(+) = N(6)-[(R)-S(8)-aminomethyldihydrolipoyl]-L-lysyl-[glycine-cleavage complex H protein] + CO2. Functionally, the glycine cleavage system catalyzes the degradation of glycine. The P protein binds the alpha-amino group of glycine through its pyridoxal phosphate cofactor; CO(2) is released and the remaining methylamine moiety is then transferred to the lipoamide cofactor of the H protein. The polypeptide is Probable glycine dehydrogenase (decarboxylating) subunit 1 (Listeria innocua serovar 6a (strain ATCC BAA-680 / CLIP 11262)).